Here is a 953-residue protein sequence, read N- to C-terminus: Ubiquitin carboxyl-terminal hydrolase CYLD (953 aa).

Residues 106 to 590 (CEERLSLFRN…LEIMIGKKKG (485 aa)) are interaction with TRIP. 2 consecutive CAP-Gly domains span residues 153-198 (LAER…VFVA) and 253-286 (DVLPGKESLGYFVGVDMDNPIGNWDGRFDGVQLC). The interval 318–350 (FMSRGVGDKGSSSHNKPKVTGSTSDPGSRNRSE) is disordered. Polar residues predominate over residues 327-346 (GSSSHNKPKVTGSTSDPGSR). Ser384 carries the phosphoserine modification. Residues 387-410 (EMSSDFGHSSPPPQPPSMNSLSSE) form a disordered region. Residues 391–466 (DFGHSSPPPQ…MPSSSGNAHG (76 aa)) are interaction with TRAF2. Ser415 and Ser419 each carry phosphoserine. The tract at residues 467 to 681 (LEVGSLAEVK…FTSEEKDPEE (215 aa)) is interaction with IKBKG/NEMO. The CAP-Gly 3 domain occupies 489-532 (GQPPGLSDVLAGLELEDECAGCTDGTFRGTRYFTCALKKALFVK). Residues 589–947 (KGIQGHYNSC…DAYMCMYQSP (359 aa)) enclose the USP domain. Catalysis depends on Cys598, which acts as the Nucleophile. The segment at 778–830 (LEDTPRQCRICGGLAMYECRECYDDPDISAGKIKQFCKTCSTQVHLHPRRLNH) is B-box. 8 residues coordinate Zn(2+): Cys785, Cys788, Cys796, Cys799, Cys814, Cys817, His822, and His830. The active-site Proton acceptor is the His868.

This sequence belongs to the peptidase C19 family. As to quaternary structure, interacts (via CAP-Gly domain) with IKBKG/NEMO (via proline-rich C-terminal region). Interacts with TRAF2 and TRIP. Interacts with PLK1, DVL1, DVL3, MAVS, TBK1, IKKE and RIGI. Interacts (via CAP-Gly domain) with microtubules. Interacts with HDAC6 and BCL3. Interacts with MAP3K7. Identified in a complex with TRAF6 and SQSTM1. Interacts with OPTN and SQSTM1. Interacts with CEP350. Interacts with RNF31; the interaction is indirect and is mediated via SPATA2. Interacts with SPATA2 (via the PUB domain); the interaction is direct and recruits CYLD to the LUBAC complex, thereby regulating TNF-alpha-induced necroptosis. In terms of processing, phosphorylated on several serine residues by IKKA and/or IKKB in response to immune stimuli. Phosphorylation requires IKBKG. Phosphorylation abolishes TRAF2 deubiquitination, interferes with the activation of Jun kinases, and strongly reduces CD40-dependent gene activation by NF-kappa-B. Post-translationally, ubiquitinated. Polyubiquitinated in hepatocytes treated with palmitic acid. Ubiquitination is mediated by E3 ligase TRIM47 and leads to proteasomal degradation.

Its subcellular location is the cytoplasm. It is found in the perinuclear region. It localises to the cytoskeleton. The protein resides in the cell membrane. The protein localises to the microtubule organizing center. Its subcellular location is the centrosome. It is found in the spindle. It localises to the cilium basal body. The catalysed reaction is Thiol-dependent hydrolysis of ester, thioester, amide, peptide and isopeptide bonds formed by the C-terminal Gly of ubiquitin (a 76-residue protein attached to proteins as an intracellular targeting signal).. Functionally, deubiquitinase that specifically cleaves 'Lys-63'- and linear 'Met-1'-linked polyubiquitin chains and is involved in NF-kappa-B activation and TNF-alpha-induced necroptosis. Negatively regulates NF-kappa-B activation by deubiquitinating upstream signaling factors. Contributes to the regulation of cell survival, proliferation and differentiation via its effects on NF-kappa-B activation. Negative regulator of Wnt signaling. Inhibits HDAC6 and thereby promotes acetylation of alpha-tubulin and stabilization of microtubules. Plays a role in the regulation of microtubule dynamics, and thereby contributes to the regulation of cell proliferation, cell polarization, cell migration, and angiogenesis. Required for normal cell cycle progress and normal cytokinesis. Inhibits nuclear translocation of NF-kappa-B. Plays a role in the regulation of inflammation and the innate immune response, via its effects on NF-kappa-B activation. Dispensable for the maturation of intrathymic natural killer cells, but required for the continued survival of immature natural killer cells. Negatively regulates TNFRSF11A signaling and osteoclastogenesis. Involved in the regulation of ciliogenesis, allowing ciliary basal bodies to migrate and dock to the plasma membrane; this process does not depend on NF-kappa-B activation. Ability to remove linear ('Met-1'-linked) polyubiquitin chains regulates innate immunity and TNF-alpha-induced necroptosis: recruited to the LUBAC complex via interaction with SPATA2 and restricts linear polyubiquitin formation on target proteins. Regulates innate immunity by restricting linear polyubiquitin formation on RIPK2 in response to NOD2 stimulation. Involved in TNF-alpha-induced necroptosis by removing linear ('Met-1'-linked) polyubiquitin chains from RIPK1, thereby regulating the kinase activity of RIPK1. Negatively regulates intestinal inflammation by removing 'Lys-63' linked polyubiquitin chain of NLRP6, thereby reducing the interaction between NLRP6 and PYCARD/ASC and formation of the NLRP6 inflammasome. Does not catalyze deubiquitination of heterotypic 'Lys-63'-/'Lys-48'-linked branched ubiquitin chains. Removes 'Lys-63' linked polyubiquitin chain of MAP3K7, which inhibits phosphorylation and blocks downstream activation of the JNK-p38 kinase cascades. Also removes 'Lys-63'-linked polyubiquitin chains of MAP3K1 and MA3P3K3, which inhibit their interaction with MAP2K1 and MAP2K2. The polypeptide is Ubiquitin carboxyl-terminal hydrolase CYLD (Cyld) (Rattus norvegicus (Rat)).